A 56-amino-acid chain; its full sequence is Large ribosomal subunit protein bL32 (56 aa).

The tract at residues 1–21 (MAVQKNKPTRSKRGMRRSHDA) is disordered. A compositionally biased stretch (basic residues) spans 7-16 (KPTRSKRGMR).

This sequence belongs to the bacterial ribosomal protein bL32 family.

This is Large ribosomal subunit protein bL32 from Hamiltonella defensa subsp. Acyrthosiphon pisum (strain 5AT).